The primary structure comprises 389 residues: Chalcone synthase 1 (389 aa).

Cys-164 is a catalytic residue.

This sequence belongs to the thiolase-like superfamily. Chalcone/stilbene synthases family.

The catalysed reaction is (E)-4-coumaroyl-CoA + 3 malonyl-CoA + 3 H(+) = 2',4,4',6'-tetrahydroxychalcone + 3 CO2 + 4 CoA. It functions in the pathway secondary metabolite biosynthesis; flavonoid biosynthesis. Functionally, the primary product of this enzyme is 4,2',4',6'-tetrahydroxychalcone (also termed naringenin-chalcone or chalcone) which can under specific conditions spontaneously isomerize into naringenin. This chain is Chalcone synthase 1 (CHS1), found in Trifolium subterraneum (Subterranean clover).